A 418-amino-acid polypeptide reads, in one-letter code: 3-isopropylmalate dehydratase large subunit (418 aa).

[4Fe-4S] cluster contacts are provided by Cys298, Cys358, and Cys361.

The protein belongs to the aconitase/IPM isomerase family. LeuC type 2 subfamily. As to quaternary structure, heterodimer of LeuC and LeuD. Requires [4Fe-4S] cluster as cofactor.

The enzyme catalyses (2R,3S)-3-isopropylmalate = (2S)-2-isopropylmalate. Its pathway is amino-acid biosynthesis; L-leucine biosynthesis; L-leucine from 3-methyl-2-oxobutanoate: step 2/4. Functionally, catalyzes the isomerization between 2-isopropylmalate and 3-isopropylmalate, via the formation of 2-isopropylmaleate. The chain is 3-isopropylmalate dehydratase large subunit from Caldanaerobacter subterraneus subsp. tengcongensis (strain DSM 15242 / JCM 11007 / NBRC 100824 / MB4) (Thermoanaerobacter tengcongensis).